Reading from the N-terminus, the 280-residue chain is MPNLKGLKTEILSVKNISRITNAMQLVALAKLRKISKKVIDTHNYVSEVYSLFNDIISQVDKSVFLKDSNFETKKTLWIVINSNLGLCGGYNSNVNKLVLQNLKTNDEIFAIGSKAVSFFRSKKIKIKDQVTNIDINFTNEKAKIISNDLLAMYINREFDEIKIVYTKFINNVTFEPAIIRIFPIVKSELHFTHKQKIIFEPDADQILNNTISIYINAIIYGTVIESQVSEQASRRTAMENATNNGQNLEHELSLKYNRQRQGAITQEISEIVSGANAQS.

Belongs to the ATPase gamma chain family. F-type ATPases have 2 components, CF(1) - the catalytic core - and CF(0) - the membrane proton channel. CF(1) has five subunits: alpha(3), beta(3), gamma(1), delta(1), epsilon(1). CF(0) has three main subunits: a, b and c.

It is found in the cell membrane. In terms of biological role, produces ATP from ADP in the presence of a proton gradient across the membrane. The gamma chain is believed to be important in regulating ATPase activity and the flow of protons through the CF(0) complex. This is ATP synthase gamma chain from Mycoplasma mycoides subsp. mycoides SC (strain CCUG 32753 / NCTC 10114 / PG1).